The chain runs to 457 residues: Transcription termination factor Rho (457 aa).

Residues 1-23 form a disordered region; it reads MNTTNKQLTEELNNTESNNDHND. The Rho RNA-BD domain maps to 77 to 152; that stretch reads LIVGEGVLEV…LKVNRVNFED (76 aa). ATP contacts are provided by residues 200 to 205, 212 to 217, and Arg243; these read GKGQRA and RTGKTV.

Belongs to the Rho family. As to quaternary structure, homohexamer. The homohexamer assembles into an open ring structure.

Facilitates transcription termination by a mechanism that involves Rho binding to the nascent RNA, activation of Rho's RNA-dependent ATPase activity, and release of the mRNA from the DNA template. The polypeptide is Transcription termination factor Rho (Rickettsia prowazekii (strain Madrid E)).